Reading from the N-terminus, the 143-residue chain is MAKKILGYIKLQVPAGAATPSPPIGPALGQRGVNIMGFCKEFNARTEKEQKGTPLPTVITVYQDKSFTFVTKTPPATYYIKQAVGLQSGSGKTGRETVGKITRAQLREIAEKKMKDLNANDVEAAARIIEGSARSMGLQIVEA.

It belongs to the universal ribosomal protein uL11 family. In terms of assembly, part of the ribosomal stalk of the 50S ribosomal subunit. Interacts with L10 and the large rRNA to form the base of the stalk. L10 forms an elongated spine to which L12 dimers bind in a sequential fashion forming a multimeric L10(L12)X complex. In terms of processing, one or more lysine residues are methylated.

Forms part of the ribosomal stalk which helps the ribosome interact with GTP-bound translation factors. The sequence is that of Large ribosomal subunit protein uL11 from Phenylobacterium zucineum (strain HLK1).